Consider the following 159-residue polypeptide: Phosphopantetheine adenylyltransferase (159 aa).

Residue histidine 16 participates in ATP binding. Lysine 40, methionine 72, and arginine 86 together coordinate substrate. Residues 87-89, glutamate 97, and 122-128 contribute to the ATP site; these read GLR and YQYLSAS.

The protein belongs to the bacterial CoaD family. As to quaternary structure, homohexamer. Mg(2+) is required as a cofactor.

The protein resides in the cytoplasm. It catalyses the reaction (R)-4'-phosphopantetheine + ATP + H(+) = 3'-dephospho-CoA + diphosphate. The protein operates within cofactor biosynthesis; coenzyme A biosynthesis; CoA from (R)-pantothenate: step 4/5. Reversibly transfers an adenylyl group from ATP to 4'-phosphopantetheine, yielding dephospho-CoA (dPCoA) and pyrophosphate. The polypeptide is Phosphopantetheine adenylyltransferase (Dehalococcoides mccartyi (strain CBDB1)).